The following is a 1026-amino-acid chain: HEAT repeat-containing protein 4 (1026 aa).

Residues 135-175 (AVKTESSANPEKKLKKSKPASTVREAPRPLIHHPCMHPDML) form a disordered region. HEAT repeat units follow at residues 530 to 568 (LLPALEAALCDKNAHVRMAAAICQYAIQSHNPLARNIMQ), 724 to 760 (KLMTAKLLPSFLHCFSDDFTAVRRAACLAAGALQIRD), and 761 to 794 (KMVLECLLNLMQRDPYWKIKAFAIRALGQIGQVS).

The sequence is that of HEAT repeat-containing protein 4 (HEATR4) from Homo sapiens (Human).